Reading from the N-terminus, the 197-residue chain is dCTP deaminase, dUMP-forming (197 aa).

Residues 105-110, Asp-123, 131-133, Gln-152, Tyr-166, Lys-174, and Gln-178 each bind dCTP; these read RSSIGR and TLE. Catalysis depends on Glu-133, which acts as the Proton donor/acceptor. The segment at 161–183 is disordered; sequence PAERPYGHPSRDSKYIGQTRPQT. A compositionally biased stretch (basic and acidic residues) spans 165-174; it reads PYGHPSRDSK.

It belongs to the dCTP deaminase family. In terms of assembly, homotrimer.

It catalyses the reaction dCTP + 2 H2O = dUMP + NH4(+) + diphosphate. It participates in pyrimidine metabolism; dUMP biosynthesis; dUMP from dCTP: step 1/1. Its function is as follows. Bifunctional enzyme that catalyzes both the deamination of dCTP to dUTP and the hydrolysis of dUTP to dUMP without releasing the toxic dUTP intermediate. This Methanothermobacter thermautotrophicus (strain ATCC 29096 / DSM 1053 / JCM 10044 / NBRC 100330 / Delta H) (Methanobacterium thermoautotrophicum) protein is dCTP deaminase, dUMP-forming.